The chain runs to 231 residues: Histone H1 (231 aa).

Over residues 1–17 the composition is skewed to low complexity; it reads MSDPAIEVAPVPVASPA. Disordered regions lie at residues 1 to 44 and 124 to 231; these read MSDP…PVSD and TKKV…AKKA. One can recognise an H15 domain in the interval 38 to 112; that stretch reads THPPVSDMIV…GASGSFKLPA (75 aa). Basic residues-rich tracts occupy residues 145–171, 178–213, and 221–231; these read KVKKTIAKKPKVASATKIKKPVAKTTK, PTKKVAAKPKAAPKPKAAPKPKVAKPKKAAAPKAKK, and KAAKKPSAKKA.

Belongs to the histone H1/H5 family.

Its subcellular location is the nucleus. It localises to the chromosome. In terms of biological role, histones H1 are necessary for the condensation of nucleosome chains into higher-order structures. This is Histone H1 from Chironomus thummi thummi (Midge).